The following is a 364-amino-acid chain: D-alanine--D-alanine ligase (364 aa).

The ATP-grasp domain occupies 141–346; the sequence is KNLFAQAGLR…YSELIERLIA (206 aa). 174–229 contributes to the ATP binding site; sequence EQELGYPCFVKPANAGSSVGISKCKQRDDLKTAFAEAFKYDRKIIIEESIVGREIE. Mg(2+) is bound by residues aspartate 300, glutamate 313, and asparagine 315.

The protein belongs to the D-alanine--D-alanine ligase family. Mg(2+) is required as a cofactor. Mn(2+) serves as cofactor.

It localises to the cytoplasm. The catalysed reaction is 2 D-alanine + ATP = D-alanyl-D-alanine + ADP + phosphate + H(+). It functions in the pathway cell wall biogenesis; peptidoglycan biosynthesis. Functionally, cell wall formation. The chain is D-alanine--D-alanine ligase from Geobacillus thermodenitrificans (strain NG80-2).